The chain runs to 156 residues: Ribosomal RNA large subunit methyltransferase H (156 aa).

S-adenosyl-L-methionine-binding positions include Leu73, Gly104, and 123 to 128 (IGPLTL).

It belongs to the RNA methyltransferase RlmH family. As to quaternary structure, homodimer.

Its subcellular location is the cytoplasm. It carries out the reaction pseudouridine(1915) in 23S rRNA + S-adenosyl-L-methionine = N(3)-methylpseudouridine(1915) in 23S rRNA + S-adenosyl-L-homocysteine + H(+). Specifically methylates the pseudouridine at position 1915 (m3Psi1915) in 23S rRNA. This chain is Ribosomal RNA large subunit methyltransferase H, found in Stenotrophomonas maltophilia (strain K279a).